The sequence spans 301 residues: Homoserine O-acetyltransferase (301 aa).

Residue C142 is the Acyl-thioester intermediate of the active site. Residues K163 and S192 each coordinate substrate. H235 acts as the Proton acceptor in catalysis. The active site involves E237. R249 lines the substrate pocket.

The protein belongs to the MetA family.

Its subcellular location is the cytoplasm. It catalyses the reaction L-homoserine + acetyl-CoA = O-acetyl-L-homoserine + CoA. The protein operates within amino-acid biosynthesis; L-methionine biosynthesis via de novo pathway; O-acetyl-L-homoserine from L-homoserine: step 1/1. Transfers an acetyl group from acetyl-CoA to L-homoserine, forming acetyl-L-homoserine. The polypeptide is Homoserine O-acetyltransferase (Clostridium acetobutylicum (strain ATCC 824 / DSM 792 / JCM 1419 / IAM 19013 / LMG 5710 / NBRC 13948 / NRRL B-527 / VKM B-1787 / 2291 / W)).